The sequence spans 2124 residues: AMB antimetabolite synthetase AmbE (2124 aa).

The adenylation stretch occupies residues 456–847 (LRAALQPQAP…LGRIDEQVKI (392 aa)). The segment at 950–1147 (DVGANIGLFS…DLLRRHGFEV (198 aa)) is methyltransferase. A Carrier 1 domain is found at 1251–1325 (APANATEAAL…ELARLLAAPA (75 aa)). At Ser-1286 the chain carries O-(pantetheine 4'-phosphoryl)serine. Positions 1359–1780 (DAYPMTSLQQ…ALLGDPVQPP (422 aa)) are condensation. Residues 1785-1859 (AEDSVELRRV…EVVRRCHAAD (75 aa)) form the Carrier 2 domain. An O-(pantetheine 4'-phosphoryl)serine modification is found at Ser-1819. The tract at residues 1886 to 2107 (RLIALPPAGG…AAEEVCAILR (222 aa)) is thioesterase.

The protein belongs to the NRP synthetase family. The cofactor is pantetheine 4'-phosphate.

The enzyme catalyses holo-[peptidyl-carrier protein] + L-glutamate + ATP = L-glutamyl-[peptidyl-carrier protein] + AMP + diphosphate. Functionally, involved in the biosynthesis of the antimetabolite L-2-amino-4-methoxy-trans-3-butenoic acid (AMB), a non-proteinogenic amino acid which is toxic for prokaryotes and eukaryotes. Adenylates L-glutamate and loads it onto its first peptidyl carrier domain via a thioester linkage to the phosphopanthetheine moiety. The second peptidyl carrier domain is loaded with a L-alanine activated by AmbB. After formation by AmbB of the L-Glu-L-Ala dipeptide at the first carrier domain of AmbE, the condensation domain of AmbE probably condenses this dipeptide with the L-Ala residue attached at the second carrier domain of AmbE to give the L-Ala-L-Glu-L-Ala tripeptide. The central amino acid, L-Glu, would then undergo a series of modifications to be converted into AMB while the two flanking L-Ala residues remain in place. Finally, the L-Ala-AMB-L-Ala tripeptide is probably released by thioester cleavage via the thioester domain of AmbE. This chain is AMB antimetabolite synthetase AmbE, found in Pseudomonas aeruginosa (strain ATCC 15692 / DSM 22644 / CIP 104116 / JCM 14847 / LMG 12228 / 1C / PRS 101 / PAO1).